The primary structure comprises 135 residues: Large ribosomal subunit protein bL19 (135 aa).

Belongs to the bacterial ribosomal protein bL19 family.

This protein is located at the 30S-50S ribosomal subunit interface and may play a role in the structure and function of the aminoacyl-tRNA binding site. In Protochlamydia amoebophila (strain UWE25), this protein is Large ribosomal subunit protein bL19.